The following is a 726-amino-acid chain: Long-chain-fatty-acid--CoA ligase ACSBG1 (726 aa).

Residues 1-39 (MPDSRAAPQESLLDASLGTTQENVGTSSLTDGQTLSKEP) form a disordered region. Positions 17–36 (LGTTQENVGTSSLTDGQTLS) are enriched in polar residues. Position 36 is a phosphoserine (S36). At Y641 the chain carries Phosphotyrosine. The interval 707–726 (SKQGSSLPGFSLRWQTGASS) is disordered.

Belongs to the ATP-dependent AMP-binding enzyme family. Bubblegum subfamily.

Its subcellular location is the cytoplasm. The protein resides in the cytoplasmic vesicle. It is found in the microsome. It localises to the endoplasmic reticulum. The protein localises to the cell membrane. It carries out the reaction a long-chain fatty acid + ATP + CoA = a long-chain fatty acyl-CoA + AMP + diphosphate. It catalyses the reaction (E)-hexadec-2-enoate + ATP + CoA = (2E)-hexadecenoyl-CoA + AMP + diphosphate. The catalysed reaction is hexadecanoate + ATP + CoA = hexadecanoyl-CoA + AMP + diphosphate. Functionally, catalyzes the conversion of fatty acids such as long-chain and very long-chain fatty acids to their active form acyl-CoAs for both synthesis of cellular lipids, and degradation via beta-oxidation. Can activate diverse saturated, monosaturated and polyunsaturated fatty acids. The polypeptide is Long-chain-fatty-acid--CoA ligase ACSBG1 (Bos taurus (Bovine)).